A 117-amino-acid chain; its full sequence is DNA-directed RNA polymerase subunit omega (117 aa).

Residues 96 to 105 show a composition bias toward basic and acidic residues; sequence KEEAEEEAKQ. Residues 96-117 are disordered; it reads KEEAEEEAKQKNSRAAKAAAAE. A compositionally biased stretch (low complexity) spans 108–117; it reads SRAAKAAAAE.

It belongs to the RNA polymerase subunit omega family. As to quaternary structure, the RNAP catalytic core consists of 2 alpha, 1 beta, 1 beta' and 1 omega subunit. When a sigma factor is associated with the core the holoenzyme is formed, which can initiate transcription.

It catalyses the reaction RNA(n) + a ribonucleoside 5'-triphosphate = RNA(n+1) + diphosphate. Promotes RNA polymerase assembly. Latches the N- and C-terminal regions of the beta' subunit thereby facilitating its interaction with the beta and alpha subunits. The polypeptide is DNA-directed RNA polymerase subunit omega (Lactococcus lactis subsp. cremoris (strain SK11)).